The chain runs to 161 residues: Phosphopantetheine adenylyltransferase (161 aa).

Residue Thr9 participates in substrate binding. Residues 9 to 10 and His17 each bind ATP; that span reads TF. 3 residues coordinate substrate: Lys41, Leu73, and Arg87. Residues 88 to 90, Glu98, and 123 to 129 each bind ATP; these read GLR and YQFISGT.

Belongs to the bacterial CoaD family. Homohexamer. Requires Mg(2+) as cofactor.

The protein resides in the cytoplasm. It catalyses the reaction (R)-4'-phosphopantetheine + ATP + H(+) = 3'-dephospho-CoA + diphosphate. Its pathway is cofactor biosynthesis; coenzyme A biosynthesis; CoA from (R)-pantothenate: step 4/5. In terms of biological role, reversibly transfers an adenylyl group from ATP to 4'-phosphopantetheine, yielding dephospho-CoA (dPCoA) and pyrophosphate. This chain is Phosphopantetheine adenylyltransferase, found in Cupriavidus taiwanensis (strain DSM 17343 / BCRC 17206 / CCUG 44338 / CIP 107171 / LMG 19424 / R1) (Ralstonia taiwanensis (strain LMG 19424)).